Reading from the N-terminus, the 175-residue chain is Methylated-DNA--protein-cysteine methyltransferase (175 aa).

Residue cysteine 142 is the Nucleophile; methyl group acceptor of the active site.

This sequence belongs to the MGMT family.

It is found in the cytoplasm. It catalyses the reaction a 6-O-methyl-2'-deoxyguanosine in DNA + L-cysteinyl-[protein] = S-methyl-L-cysteinyl-[protein] + a 2'-deoxyguanosine in DNA. The catalysed reaction is a 4-O-methyl-thymidine in DNA + L-cysteinyl-[protein] = a thymidine in DNA + S-methyl-L-cysteinyl-[protein]. In terms of biological role, involved in the cellular defense against the biological effects of O6-methylguanine (O6-MeG) and O4-methylthymine (O4-MeT) in DNA. Repairs the methylated nucleobase in DNA by stoichiometrically transferring the methyl group to a cysteine residue in the enzyme. This is a suicide reaction: the enzyme is irreversibly inactivated. The chain is Methylated-DNA--protein-cysteine methyltransferase from Thermococcus sibiricus (strain DSM 12597 / MM 739).